The chain runs to 293 residues: Protein nud-2 (293 aa).

Positions 36–147 (EIEKMMDSEL…EKIAMLESEL (112 aa)) form a coiled coil. The interval 239–293 (KSQRVSTGTGAGACINRIVKDLMTKVERLDSILSTIRVSNNSSNNNSSHLTTTRA) is required for interaction with unc-83 isoform c.

This sequence belongs to the nudE family. In terms of assembly, component of a dynein-regulating complex composed of at least lis-1 and nud-2. Interacts with lis-1; the interaction is direct. Interacts (via C-terminus) with unc-83; the interaction is direct, and is required for recruitment of nud-2 to the nuclear envelope. As to expression, expressed in ventral cord neurons, the pharynx, seam cells of the hypodermis and in vulval muscle cells.

It localises to the nucleus envelope. Functionally, part of a complex with lis-1, which is recruited to the nuclear envelope by unc-83, where, in turn, it recruits dynein to the nuclear surface and regulates nuclear migration in hypodermal precursor cells. Plays a role in GABAergic synaptic vesicle localization in the ventral nerve cord. The chain is Protein nud-2 from Caenorhabditis elegans.